Reading from the N-terminus, the 219-residue chain is Bacterial microcompartment shell protein EutL (219 aa).

BMC circularly permuted domains follow at residues 1 to 113 (MPAL…GAAF) and 114 to 215 (QWAN…ARNP). Positions 45, 46, 83, and 113 each coordinate ethanolamine. Residues 45-46 (DD) form a part of the acidic patch lining the small pore region. A Zn(2+)-binding site is contributed by E157. An ethanolamine-binding site is contributed by 183–185 (TNY).

It belongs to the EutL/PduB family. Homotrimerizes to form a pseudohexamer. The trimers form a two-dimensional array about 37 Angstroms thick.

Its subcellular location is the bacterial microcompartment. It functions in the pathway amine and polyamine degradation; ethanolamine degradation. A component of the bacterial microcompartment (BMC) shell dedicated to ethanolamine degradation. Two crystal forms have been seen; a form with a closed central pore that has 3 very small (1.1-2.2 Angstroms) channels per trimer lined by acidic and aromatic residues. A form with a large central pore (8-12 Angstroms) has also been seen; this is probably a functional pore which allows molecules to enter and exit the BMC in a selective, gated manner. Another group only sees the central pore in the presence of Zn(2+); soaking crystals in ZnCl(2) leads to dramatic conformational changes that open a central pore of about 12 Angstroms. Whether Zn(2+) binding is physiologically relevant is unclear, however it suggests a gating mechanism exists. Ethanolamine-binding by the small channels has been hypothesized to stabilize the EutL central pore in a closed (non-transporting) state. An open pore is thought to be large enough to transport ATP and/or cobalamin. The protein is Bacterial microcompartment shell protein EutL (eutL) of Escherichia coli (strain K12).